A 339-amino-acid polypeptide reads, in one-letter code: DNA-directed RNA polymerase subunit alpha (339 aa).

An alpha N-terminal domain (alpha-NTD) region spans residues 1 to 235 (MVIQKNWQEL…DQLQVFVNFE (235 aa)). Residues 251–339 (FNPALLKKVD…DLAKRFEEHY (89 aa)) form an alpha C-terminal domain (alpha-CTD) region.

This sequence belongs to the RNA polymerase alpha chain family. As to quaternary structure, homodimer. The RNAP catalytic core consists of 2 alpha, 1 beta, 1 beta' and 1 omega subunit. When a sigma factor is associated with the core the holoenzyme is formed, which can initiate transcription.

The catalysed reaction is RNA(n) + a ribonucleoside 5'-triphosphate = RNA(n+1) + diphosphate. DNA-dependent RNA polymerase catalyzes the transcription of DNA into RNA using the four ribonucleoside triphosphates as substrates. The protein is DNA-directed RNA polymerase subunit alpha of Methylorubrum extorquens (strain CM4 / NCIMB 13688) (Methylobacterium extorquens).